The primary structure comprises 407 residues: Phosphopentomutase (407 aa).

Asp-10, Asp-306, His-311, Asp-347, His-348, and His-359 together coordinate Mn(2+).

It belongs to the phosphopentomutase family. It depends on Mn(2+) as a cofactor.

It is found in the cytoplasm. It carries out the reaction 2-deoxy-alpha-D-ribose 1-phosphate = 2-deoxy-D-ribose 5-phosphate. It catalyses the reaction alpha-D-ribose 1-phosphate = D-ribose 5-phosphate. It participates in carbohydrate degradation; 2-deoxy-D-ribose 1-phosphate degradation; D-glyceraldehyde 3-phosphate and acetaldehyde from 2-deoxy-alpha-D-ribose 1-phosphate: step 1/2. In terms of biological role, isomerase that catalyzes the conversion of deoxy-ribose 1-phosphate (dRib-1-P) and ribose 1-phosphate (Rib-1-P) to deoxy-ribose 5-phosphate (dRib-5-P) and ribose 5-phosphate (Rib-5-P), respectively. The sequence is that of Phosphopentomutase from Salmonella paratyphi A (strain AKU_12601).